The chain runs to 758 residues: Probable C-mannosyltransferase DPY19L2 (758 aa).

Residues 1 to 58 form a disordered region; it reads MRKQGVSSKRLQSSGRSQSKGRRGASLAREPEVEEEMEKSALGGGKLPRGSWRSSPGR. The Nuclear segment spans residues 1 to 107; it reads MRKQGVSSKR…ELQARRFSSR (107 aa). Over residues 7-18 the composition is skewed to low complexity; it reads SSKRLQSSGRSQ. A helical transmembrane segment spans residues 108–128; that stretch reads TTLGIAVFVAILHWLHLVTLF. The Perinuclear space segment spans residues 129-194; that stretch reads ENDRHFSHLS…INAIKRFHLY (66 aa). The helical transmembrane segment at 195–215 threads the bilayer; sequence PEVIIASWYCTFMGIMNLFGL. Residues 216 to 241 lie on the Nuclear side of the membrane; it reads ETKTCWNVTRIEPLNEVQSCEGLGDP. 2 helical membrane passes run 242–262 and 263–283; these read ACFYVGVIFILNGLMMGLFFM and YGAYLSGTQLGGLITVLCFFF. At 284-296 the chain is on the nuclear side; sequence NHGEATRVMWTPP. The chain crosses the membrane as a helical span at residues 297-317; sequence LRESFSYPFLVLQMCILTLIL. Residues 318–343 lie on the Perinuclear space side of the membrane; the sequence is RTSSNDRRPFIALCLSNVAFMLPWQF. The helical transmembrane segment at 344 to 364 threads the bilayer; the sequence is AQFILFTQIASLFPMYVVGYI. The Nuclear segment spans residues 365-371; that stretch reads EPSKFQK. Residues 372-392 traverse the membrane as a helical segment; that stretch reads IIYMNMISVTLSFILMFGNSM. Residues 393–422 are Perinuclear space-facing; sequence YLSSYYSSSLLMTWAIILKRNEIQKLGVSK. A helical transmembrane segment spans residues 423–443; it reads LNFWLIQGSAWWCGTIILKFL. Residues 444-488 lie on the Nuclear side of the membrane; the sequence is TSKILGVSDHIRLSDLIAARILRYTDFDTLIYTCAPEFDFMEKAT. A helical transmembrane segment spans residues 489-509; sequence PLRYTKTLLLPVVMVITCFIF. The Perinuclear space portion of the chain corresponds to 510–533; that stretch reads KKTVRDISYVLATNIYLRKQLLEH. A helical membrane pass occupies residues 534–554; sequence SELAFHTLQLLVFTALAILIM. The Nuclear segment spans residues 555–758; it reads RLKMFLTPHM…NSVYRVLKVN (204 aa).

It belongs to the dpy-19 family. As to quaternary structure, interacts with FAM209. In terms of tissue distribution, widely expressed with high expression in testis. Not detectable in ejaculated sperm (at protein level).

Its subcellular location is the nucleus inner membrane. Functionally, probable C-mannosyltransferase that mediates C-mannosylation of tryptophan residues on target proteins. Its function is as follows. Required during spermatogenesis for sperm head elongation and acrosome formation. Also plays a role in acrosome attachment to the nuclear envelope. The chain is Probable C-mannosyltransferase DPY19L2 from Homo sapiens (Human).